The primary structure comprises 144 residues: Ig heavy chain V region M167 (144 aa).

A signal peptide spans 1-19; sequence MKMWLNWVFLLTLLHGIQC. Positions 20-133 constitute an Ig-like domain; that stretch reads EVKVVESGGG…GNSYFGYFDV (114 aa).

This Mus musculus (Mouse) protein is Ig heavy chain V region M167.